Consider the following 321-residue polypeptide: Tetraacyldisaccharide 4'-kinase (321 aa).

54-61 (SVGGTGKT) lines the ATP pocket.

This sequence belongs to the LpxK family.

It catalyses the reaction a lipid A disaccharide + ATP = a lipid IVA + ADP + H(+). It functions in the pathway glycolipid biosynthesis; lipid IV(A) biosynthesis; lipid IV(A) from (3R)-3-hydroxytetradecanoyl-[acyl-carrier-protein] and UDP-N-acetyl-alpha-D-glucosamine: step 6/6. In terms of biological role, transfers the gamma-phosphate of ATP to the 4'-position of a tetraacyldisaccharide 1-phosphate intermediate (termed DS-1-P) to form tetraacyldisaccharide 1,4'-bis-phosphate (lipid IVA). The polypeptide is Tetraacyldisaccharide 4'-kinase (Rickettsia rickettsii).